Reading from the N-terminus, the 141-residue chain is Hemoglobin subunit alpha-D (141 aa).

The region spanning 1-141 (MLGAEETALV…VAAVLAEKYR (141 aa)) is the Globin domain. H58 and H87 together coordinate heme b.

This sequence belongs to the globin family. In terms of assembly, heterotetramer of two alpha-D chains and two beta chains. In terms of tissue distribution, red blood cells.

In terms of biological role, involved in oxygen transport from the lung to the various peripheral tissues. The polypeptide is Hemoglobin subunit alpha-D (HBAD) (Phalacrocorax carbo (Great cormorant)).